The following is a 339-amino-acid chain: Terpene synthase 7 (339 aa).

Positions 79-84 match the DDxx(x)D/E motif motif; the sequence is DDFLES. The NDxxSxxxD/E motif signature appears at 219–227; the sequence is NDCASYAKE.

This sequence belongs to the terpene synthase family.

The catalysed reaction is (2E,6E)-farnesyl diphosphate = (-)-beta-barbatene + diphosphate. Its function is as follows. Terpene synthase that converts its substrate farnesyl diphosphate (FPP) into the sesquiterpene beta-barbatene. This is Terpene synthase 7 from Dictyostelium discoideum (Social amoeba).